The sequence spans 146 residues: Anti-sigma F factor (146 aa).

It belongs to the anti-sigma-factor family.

The catalysed reaction is L-seryl-[protein] + ATP = O-phospho-L-seryl-[protein] + ADP + H(+). It catalyses the reaction L-threonyl-[protein] + ATP = O-phospho-L-threonyl-[protein] + ADP + H(+). In terms of biological role, binds to sigma F and blocks its ability to form an RNA polymerase holoenzyme (E-sigma F). Phosphorylates SpoIIAA on a serine residue. This phosphorylation may enable SpoIIAA to act as an anti-anti-sigma factor that counteracts SpoIIAB and thus releases sigma F from inhibition. This chain is Anti-sigma F factor, found in Bacillus cytotoxicus (strain DSM 22905 / CIP 110041 / 391-98 / NVH 391-98).